The chain runs to 113 residues: Small ribosomal subunit protein bS6 (113 aa).

The protein belongs to the bacterial ribosomal protein bS6 family.

Its function is as follows. Binds together with bS18 to 16S ribosomal RNA. This is Small ribosomal subunit protein bS6 from Pseudoalteromonas translucida (strain TAC 125).